We begin with the raw amino-acid sequence, 476 residues long: Elongation factor Tu, chloroplastic (476 aa).

Residues 1–67 constitute a chloroplast transit peptide; the sequence is MAISAPAACS…QSTRRSFTVR (67 aa). The tr-type G domain occupies 77-281; sequence KPHVNIGTIG…AVDDYIPIPQ (205 aa). The G1 stretch occupies residues 86–93; the sequence is GHVDHGKT. 86-93 contributes to the GTP binding site; it reads GHVDHGKT. Residue Thr-94 is modified to Phosphothreonine. Residues 127–131 form a G2 region; that stretch reads GITIN. The segment at 148–151 is G3; the sequence is DCPG. GTP-binding positions include 148-152 and 203-206; these read DCPGH and NKED. Positions 203–206 are G4; the sequence is NKED. The interval 241-243 is G5; it reads SAL.

This sequence belongs to the TRAFAC class translation factor GTPase superfamily. Classic translation factor GTPase family. EF-Tu/EF-1A subfamily. As to quaternary structure, interacts with PI5K2. Interacts with APD2.

It is found in the plastid. Its subcellular location is the chloroplast. In terms of biological role, this protein promotes the GTP-dependent binding of aminoacyl-tRNA to the A-site of ribosomes during protein biosynthesis. The chain is Elongation factor Tu, chloroplastic (TUFA) from Arabidopsis thaliana (Mouse-ear cress).